The primary structure comprises 305 residues: GMP synthase [glutamine-hydrolyzing] subunit B (305 aa).

The 184-residue stretch at 2–185 (VDVDSFVEDA…LGLEEIISER (184 aa)) folds into the GMPS ATP-PPase domain. An ATP-binding site is contributed by 29–35 (SGGVDSS).

As to quaternary structure, heterodimer composed of a glutamine amidotransferase subunit (A) and a GMP-binding subunit (B).

It carries out the reaction XMP + L-glutamine + ATP + H2O = GMP + L-glutamate + AMP + diphosphate + 2 H(+). It participates in purine metabolism; GMP biosynthesis; GMP from XMP (L-Gln route): step 1/1. Its function is as follows. Catalyzes the synthesis of GMP from XMP. This is GMP synthase [glutamine-hydrolyzing] subunit B from Halobacterium salinarum (strain ATCC 29341 / DSM 671 / R1).